Reading from the N-terminus, the 354-residue chain is Uroporphyrinogen decarboxylase (354 aa).

Residues 27–31 (RQAGR), D77, Y154, T209, and H327 contribute to the substrate site.

The protein belongs to the uroporphyrinogen decarboxylase family. In terms of assembly, homodimer.

The protein localises to the cytoplasm. It carries out the reaction uroporphyrinogen III + 4 H(+) = coproporphyrinogen III + 4 CO2. It functions in the pathway porphyrin-containing compound metabolism; protoporphyrin-IX biosynthesis; coproporphyrinogen-III from 5-aminolevulinate: step 4/4. In terms of biological role, catalyzes the decarboxylation of four acetate groups of uroporphyrinogen-III to yield coproporphyrinogen-III. The polypeptide is Uroporphyrinogen decarboxylase (Enterobacter sp. (strain 638)).